Consider the following 359-residue polypeptide: DNA replication and repair protein RecF (359 aa).

ATP is bound at residue Gly30–Thr37.

This sequence belongs to the RecF family.

It localises to the cytoplasm. Its function is as follows. The RecF protein is involved in DNA metabolism; it is required for DNA replication and normal SOS inducibility. RecF binds preferentially to single-stranded, linear DNA. It also seems to bind ATP. This Lactococcus lactis subsp. cremoris (strain MG1363) protein is DNA replication and repair protein RecF.